Consider the following 987-residue polypeptide: MPDIPTKRRLSNGSVIDNTNKRQMQSSFVPEVEQESDGYLSEDSSDQPIFDMAVAANSNQWQETITKVVKSVVSIQFTHVSNFDTESSIVSEATGFVVDAKRGLILTNRHVVGPGPFCGYVVFDNHEEAVVKPIYRDPVHDFGFLQFDAKSIKYMDVTQLELKPDLAKVGTEIRVVGNDAGEKLSILAGFISRLDRNAPDYGALTYNDFNTEYIQAAASASGGSSGSPVVNEDGHAVAIQAGGSSEASTDFFLPVYRPLRALRCIQESQPITRGDIQVEWSLKPFDECRRLGLTSEAERIARERFPDKIGLLVAELVLPEGPADELIKEGDTLISINDEPISTFIKVDEILDESVGKELKVVIQRGGEEITQTIKIGDLHSITPDRYVDVAGASFNQMSYQVARCYCIPVKGVYINDASGSFEFSTFEKTGWLLETVDDKQTPDLDTFIEVMKQIPDRQKVTITYRHVSDLHTESIQVIYIERHWQSTFRLAVRNDKSGLWDFTDIQDKPLPPLKLEPQNAKYINIPFENEEKQGCASLVKSFVQVRTVAPVPMDSYPYRKEIGYGVVVDATNGYVLVSRRFVPHDMCDIFVIFAESVDIPGKVVFLHPNQNYAIIKYDPKLVLADVQAPKFSDKPLKRGEKSFFVGYNYNLRLVTEDVKVSGISSLNVPAASLSPRYRGTNLECVLLDSKLCQECDSGVLADEDGTLRSFWLSYLGESNCDQTTDRMYRMGLDVTDVLDVINKLKDNEIPVDLRILDAEFSSITILQGRTRGVPQKWINEFEKVCHDELKFLSVERVAAAKLNQTPNPLKIGDILLSVNGSIVKTMRDLKIMYNKPSLDFKIIRSKKEMDITVPTVETTSLNTSHVVFWCGAILQAPHHGVRQLMEKIPSEVYVTRKNSGGPAHQYGIVTNSFITHVNDKETKNLESFMDAITDIADNTYIKLRLVSFDNVPVAISVKTNYHYFPTAELKKNKETGEWKEIEHKEK.

Residues 1–29 (MPDIPTKRRLSNGSVIDNTNKRQMQSSFV) are disordered. Over residues 11–28 (SNGSVIDNTNKRQMQSSF) the composition is skewed to polar residues. The tract at residues 69–262 (VKSVVSIQFT…LPVYRPLRAL (194 aa)) is serine protease. Active-site charge relay system residues include H110, D141, and S224. 2 consecutive PDZ domains span residues 279 to 364 (EWSL…VVIQ) and 878 to 950 (PHHG…VSFD).

Belongs to the peptidase S1C family.

The protein resides in the nucleus. In terms of biological role, nuclear serine protease which mediates apoptosis. The protein is Pro-apoptotic serine protease NMA111 (NMA111) of Debaryomyces hansenii (strain ATCC 36239 / CBS 767 / BCRC 21394 / JCM 1990 / NBRC 0083 / IGC 2968) (Yeast).